Consider the following 152-residue polypeptide: Regulatory protein RecX (152 aa).

This sequence belongs to the RecX family.

The protein resides in the cytoplasm. Modulates RecA activity. This chain is Regulatory protein RecX, found in Chromohalobacter salexigens (strain ATCC BAA-138 / DSM 3043 / CIP 106854 / NCIMB 13768 / 1H11).